The sequence spans 449 residues: Transport protein ComB (449 aa).

Residues 1–20 (MKPEFLESAEFYNRRYHNFS) lie on the Cytoplasmic side of the membrane. Residues 21–41 (SSVIVPMALLLVFLLGFATVA) traverse the membrane as a helical segment. At 42 to 449 (EKEMSLSTRA…YYLDQFLNKE (408 aa)) the chain is on the extracellular side.

Belongs to the membrane fusion protein (MFP) (TC 8.A.1) family.

The protein resides in the cell membrane. In terms of biological role, required for induction of competence. The sequence is that of Transport protein ComB (comB) from Streptococcus pneumoniae (strain ATCC BAA-255 / R6).